The chain runs to 389 residues: Protein CysO (389 aa).

At lysine 127 the chain carries N6-(pyridoxal phosphate)lysine. Residues asparagine 155, glycine 261–histidine 265, and serine 341 contribute to the pyridoxal 5'-phosphate site.

Belongs to the cysteine synthase/cystathionine beta-synthase family. Homodimer. Requires pyridoxal 5'-phosphate as cofactor.

The catalysed reaction is O-acetyl-L-serine + hydrogen sulfide = L-cysteine + acetate. It catalyses the reaction O-phospho-L-serine + hydrogen sulfide + H(+) = L-cysteine + phosphate. The enzyme catalyses L-homocysteine + L-serine = L,L-cystathionine + H2O. Its pathway is amino-acid biosynthesis; L-cysteine biosynthesis; L-cysteine from L-serine: step 2/2. Its function is as follows. Cysteine synthase that can also catalyze the synthesis of S-sulfo-L-cysteine from thiosulfate and O(3)-acetyl-L-serine, as well as the sulfhydrylation of L-serine by sulfide. This chain is Protein CysO (cysO), found in Aeropyrum pernix (strain ATCC 700893 / DSM 11879 / JCM 9820 / NBRC 100138 / K1).